The primary structure comprises 536 residues: Peptide chain release factor 3 (536 aa).

The tr-type G domain occupies Ser13–Gln281. GTP is bound by residues Ser22–Thr29, Asp90–His94, and Asn144–Asp147.

Belongs to the TRAFAC class translation factor GTPase superfamily. Classic translation factor GTPase family. PrfC subfamily.

The protein localises to the cytoplasm. Its function is as follows. Increases the formation of ribosomal termination complexes and stimulates activities of RF-1 and RF-2. It binds guanine nucleotides and has strong preference for UGA stop codons. It may interact directly with the ribosome. The stimulation of RF-1 and RF-2 is significantly reduced by GTP and GDP, but not by GMP. The sequence is that of Peptide chain release factor 3 from Chromobacterium violaceum (strain ATCC 12472 / DSM 30191 / JCM 1249 / CCUG 213 / NBRC 12614 / NCIMB 9131 / NCTC 9757 / MK).